Reading from the N-terminus, the 750-residue chain is Polyribonucleotide nucleotidyltransferase (750 aa).

Aspartate 492 and aspartate 498 together coordinate Mg(2+). The KH domain occupies 559-618 (PQLSVVEVNPEIIRVIIGPGGKNIKAITSATGASIDIEDSGRISIFAPTKESMDMAREMV). The S1 motif domain occupies 628-695 (GKNYTAKVRK…NDGRVRASRK (68 aa)). The interval 705–750 (EWDPADTARPPRKPRDRDDRGDRGGRGDRGDRGGRNGRGGDRRDRR) is disordered. The span at 717–750 (KPRDRDDRGDRGGRGDRGDRGGRNGRGGDRRDRR) shows a compositional bias: basic and acidic residues.

This sequence belongs to the polyribonucleotide nucleotidyltransferase family. Mg(2+) serves as cofactor.

The protein localises to the cytoplasm. It carries out the reaction RNA(n+1) + phosphate = RNA(n) + a ribonucleoside 5'-diphosphate. Functionally, involved in mRNA degradation. Catalyzes the phosphorolysis of single-stranded polyribonucleotides processively in the 3'- to 5'-direction. The sequence is that of Polyribonucleotide nucleotidyltransferase from Oleidesulfovibrio alaskensis (strain ATCC BAA-1058 / DSM 17464 / G20) (Desulfovibrio alaskensis).